A 264-amino-acid polypeptide reads, in one-letter code: S-adenosylmethionine decarboxylase proenzyme (264 aa).

The Schiff-base intermediate with substrate; via pyruvic acid role is filled by serine 112. Position 112 is a pyruvic acid (Ser); by autocatalysis (serine 112). Residue histidine 117 is the Proton acceptor; for processing activity of the active site. The Proton donor; for catalytic activity role is filled by cysteine 140.

It belongs to the prokaryotic AdoMetDC family. Type 2 subfamily. In terms of assembly, heterooctamer of four alpha and four beta chains arranged as a tetramer of alpha/beta heterodimers. Pyruvate is required as a cofactor. Is synthesized initially as an inactive proenzyme. Formation of the active enzyme involves a self-maturation process in which the active site pyruvoyl group is generated from an internal serine residue via an autocatalytic post-translational modification. Two non-identical subunits are generated from the proenzyme in this reaction, and the pyruvate is formed at the N-terminus of the alpha chain, which is derived from the carboxyl end of the proenzyme. The post-translation cleavage follows an unusual pathway, termed non-hydrolytic serinolysis, in which the side chain hydroxyl group of the serine supplies its oxygen atom to form the C-terminus of the beta chain, while the remainder of the serine residue undergoes an oxidative deamination to produce ammonia and the pyruvoyl group blocking the N-terminus of the alpha chain.

The catalysed reaction is S-adenosyl-L-methionine + H(+) = S-adenosyl 3-(methylsulfanyl)propylamine + CO2. The protein operates within amine and polyamine biosynthesis; S-adenosylmethioninamine biosynthesis; S-adenosylmethioninamine from S-adenosyl-L-methionine: step 1/1. Catalyzes the decarboxylation of S-adenosylmethionine to S-adenosylmethioninamine (dcAdoMet), the propylamine donor required for the synthesis of the polyamines spermine and spermidine from the diamine putrescine. This chain is S-adenosylmethionine decarboxylase proenzyme, found in Salmonella dublin (strain CT_02021853).